The sequence spans 404 residues: WD repeat and SOCS box-containing protein 2 (404 aa).

WD repeat units follow at residues 105 to 148 (PPSR…LLLN), 151 to 191 (GHQD…KQIQ), 195 to 234 (GHLQ…LIRK), 237 to 276 (GHQS…RLRS), and 291 to 330 (VHMS…PVAF). The SOCS box domain maps to 356 to 404 (HVQFWTAPRVLSSLKHLCRKALRSFLTTYQVLALPIPKKMKEFLTYRTF).

It participates in protein modification; protein ubiquitination. Its function is as follows. May be a substrate-recognition component of a SCF-like ECS (Elongin-Cullin-SOCS-box protein) E3 ubiquitin ligase complex which mediates the ubiquitination and subsequent proteasomal degradation of target proteins. The chain is WD repeat and SOCS box-containing protein 2 (Wsb2) from Mus musculus (Mouse).